A 145-amino-acid polypeptide reads, in one-letter code: Oleosin L (145 aa).

A2 carries the N-acetylalanine modification. The next 2 helical transmembrane spans lie at 36–56 (GSLLVLSGLTLAGTVIALTIA) and 59–79 (LLVIFSPVLVPAVITIFLLGA). The short motif at 58–69 (PLLVIFSPVLVP) is the Proline-knot element. Positions 123–132 (KAREMKDRAE) are enriched in basic and acidic residues. A disordered region spans residues 123 to 145 (KAREMKDRAEQFSQQPVAGSQTS). Residues 133–145 (QFSQQPVAGSQTS) are compositionally biased toward polar residues.

Belongs to the oleosin family. As to expression, expressed in seeds (at protein level).

It is found in the lipid droplet. The protein resides in the membrane. Functionally, may have a structural role to stabilize the lipid body during desiccation of the seed by preventing coalescence of the oil. Probably interacts with both lipid and phospholipid moieties of lipid bodies. May also provide recognition signals for specific lipase anchorage in lipolysis during seedling growth. In Sesamum indicum (Oriental sesame), this protein is Oleosin L.